A 258-amino-acid polypeptide reads, in one-letter code: Phosphate import ATP-binding protein PstB (258 aa).

The ABC transporter domain occupies 13–253 (ITVENLNLWY…PREKSTEDYI (241 aa)). 45–52 (GPSGCGKS) is a binding site for ATP.

Belongs to the ABC transporter superfamily. Phosphate importer (TC 3.A.1.7) family. As to quaternary structure, the complex is composed of two ATP-binding proteins (PstB), two transmembrane proteins (PstC and PstA) and a solute-binding protein (PstS).

The protein localises to the cell membrane. The catalysed reaction is phosphate(out) + ATP + H2O = ADP + 2 phosphate(in) + H(+). Its function is as follows. Part of the ABC transporter complex PstSACB involved in phosphate import. Responsible for energy coupling to the transport system. In Methanosarcina mazei (strain ATCC BAA-159 / DSM 3647 / Goe1 / Go1 / JCM 11833 / OCM 88) (Methanosarcina frisia), this protein is Phosphate import ATP-binding protein PstB.